The sequence spans 159 residues: MAKDEVVDRVTALAESLLSSQEMELVDIEYKREGRHMVLRLFVDKAGGITLDDCALVSREFSEILDVEDFISENYTLEVSSPGLNRPLKRESDYERYRGRLVKVRTYDVVEDEAGNRRKTFLGDLEGLAGGVVTLKLREGQMARIPLAKIAKANLEFEF.

Belongs to the RimP family.

It is found in the cytoplasm. In terms of biological role, required for maturation of 30S ribosomal subunits. This is Ribosome maturation factor RimP from Geobacter metallireducens (strain ATCC 53774 / DSM 7210 / GS-15).